Consider the following 384-residue polypeptide: DNA replication and repair protein RecF (384 aa).

An ATP-binding site is contributed by 43-50 (GENGSGKT).

It belongs to the RecF family.

Its subcellular location is the cytoplasm. Functionally, the RecF protein is involved in DNA metabolism; it is required for DNA replication and normal SOS inducibility. RecF binds preferentially to single-stranded, linear DNA. It also seems to bind ATP. This chain is DNA replication and repair protein RecF, found in Brucella suis biovar 1 (strain 1330).